The following is a 548-amino-acid chain: DNA ligase (548 aa).

Glu244 contacts ATP. Lys246 acts as the N6-AMP-lysine intermediate in catalysis. Positions 251, 266, 295, 334, 405, and 411 each coordinate ATP.

It belongs to the ATP-dependent DNA ligase family. It depends on Mg(2+) as a cofactor.

It carries out the reaction ATP + (deoxyribonucleotide)n-3'-hydroxyl + 5'-phospho-(deoxyribonucleotide)m = (deoxyribonucleotide)n+m + AMP + diphosphate.. Its function is as follows. DNA ligase that seals nicks in double-stranded DNA during DNA replication, DNA recombination and DNA repair. The protein is DNA ligase of Methanoculleus marisnigri (strain ATCC 35101 / DSM 1498 / JR1).